A 495-amino-acid chain; its full sequence is Protein-serine O-palmitoleoyltransferase porcupine (495 aa).

A run of 8 helical transmembrane segments spans residues 46–66 (TQYI…VLIV), 92–112 (VIDH…AVQW), 184–204 (TVLS…GPWI), 232–252 (MLIH…FLLT), 358–378 (PFGT…LHGL), 403–422 (LATI…SCTV), 434–454 (VINM…GCIF), and 475–495 (TELN…YFVI). The active site involves His376.

The protein belongs to the membrane-bound acyltransferase family. Porcupine subfamily.

The protein localises to the endoplasmic reticulum membrane. It catalyses the reaction [Wnt protein]-L-serine + (9Z)-hexadecenoyl-CoA = [Wnt protein]-O-(9Z)-hexadecenoyl-L-serine + CoA. Functionally, protein-serine O-palmitoleoyltransferase that acts as a key regulator of the Wnt signaling pathway by mediating the attachment of palmitoleate, a 16-carbon monounsaturated fatty acid (C16:1(9Z)), to Wnt proteins. Serine palmitoleoylation of WNT proteins is required for efficient binding to frizzled receptors. This Anopheles gambiae (African malaria mosquito) protein is Protein-serine O-palmitoleoyltransferase porcupine.